We begin with the raw amino-acid sequence, 792 residues long: E3 UFM1-protein ligase 1 (792 aa).

The residue at position 2 (A2) is an N-acetylalanine. The interval 2-200 is mediates interaction with DDRGK1; sequence ADAWEEIRRL…RGLFSAITRP (199 aa). The segment at 2–212 is required for E3 UFM1-protein ligase activity; that stretch reads ADAWEEIRRL…VNSLISRYGF (211 aa). The involved in CDK5RAP3-binding stretch occupies residues 121–250; the sequence is DRLAEEVNDK…KAVFIPDIYS (130 aa). Residues 200–400 are mediates interaction with TRIP4; the sequence is PTAVNSLISR…NPVHLITEED (201 aa). A disordered region spans residues 412 to 471; it reads TSKKDKKDERRRKATEGSGSVRGGGGSNAREYKIKKTKKKGRKDDDSDDESSHTGKKKPE. The residue at position 433 (R433) is an Omega-N-methylarginine. Residues 453–471 are compositionally biased toward basic and acidic residues; it reads RKDDDSDDESSHTGKKKPE. S458 is subject to Phosphoserine. The interval 488–682 is mediates interaction with CDK5RAP3; that stretch reads LQDAPEEFIS…QLKVTEDPAL (195 aa). Position 534 is a phosphothreonine (T534). S752 is modified (phosphoserine).

It belongs to the UFL1 family. As to quaternary structure, catalytic component of the UFM1 ribosome E3 ligase (UREL) complex, composed of UFL1, DDRGK1 and CDK5RAP3. Interacts with E2-like enzyme UFC1. Interacts with RELA. Interacts with NBN; promoting recruitment to double-strand breaks following DNA damage. Interacts (when phosphorylated) with YWHAG/14-3-3-gamma; sequestering UFL1 and preventing its association with PDCD1/PD-1 substrate. In terms of processing, ubiquitinated, leading to its degradation by the proteasome. Interaction with CDK5RAP3 protects both proteins against ubiquitination and degradation via the proteasome. Post-translationally, phosphorylation at Thr-534 by AMPK promotes its interaction with YWHAG/14-3-3-gamma, thereby preventing UFL1 association with PDCD1/PD-1 substrate.

The protein localises to the endoplasmic reticulum membrane. Its subcellular location is the cytoplasm. The protein resides in the cytosol. It localises to the nucleus. It is found in the chromosome. Functionally, E3 protein ligase that mediates ufmylation, the covalent attachment of the ubiquitin-like modifier UFM1 to lysine residues on target proteins, and which plays a key role in various processes, such as ribosome recycling, response to DNA damage, interferon response or reticulophagy (also called ER-phagy). Catalyzes ufmylation of many protein, such as CD274/PD-L1, CDK5RAP3, CYB5R3, DDRGK1, EIF6, histone H4, MRE11, P4HB, PDCD1/PD-1, TRIP4, RPN1, RPS20/uS10, RPL10/uL16, RPL26/uL24, SYVN1/HRD1 and TP53/p53. As part of the UREL complex, plays a key role in ribosome recycling by catalyzing mono-ufmylation of RPL26/uL24 subunit of the 60S ribosome. Ufmylation of RPL26/uL24 occurs on free 60S ribosomes following ribosome dissociation: it weakens the junction between post-termination 60S subunits and SEC61 translocons, promoting release and recycling of the large ribosomal subunit from the endoplasmic reticulum membrane. Ufmylation of RPL26/uL24 and subsequent 60S ribosome recycling either take place after normal termination of translation or after ribosome stalling during cotranslational translocation at the endoplasmic reticulum. Involved in reticulophagy in response to endoplasmic reticulum stress by mediating ufmylation of proteins such as CYB5R3 and RPN1, thereby promoting lysosomal degradation of ufmylated proteins. Ufmylation in response to endoplasmic reticulum stress is essential for processes such as hematopoiesis, blood vessel morphogenesis or inflammatory response. Regulates inflammation in response to endoplasmic reticulum stress by promoting reticulophagy, leading to inhibit the activity of the NF-kappa-B transcription factor. Mediates ufmylation of DDRGK1 and CDK5RAP3; the role of these modifications is however unclear: as both DDRGK1 and CDK5RAP3 act as substrate adapters for ufmylation, it is uncertain whether ufmylation of these proteins is, a collateral effect or is required for ufmylation. Acts as a negative regulator of T-cell activation by mediating ufmylation and stabilization of PDCD1/PD-1. Also involved in the response to DNA damage: recruited to double-strand break sites following DNA damage and mediates monoufmylation of histone H4 and ufmylation of MRE11. Mediates ufmylation of TP53/p53, promoting its stability. Catalyzes ufmylation of TRIP4, thereby playing a role in nuclear receptor-mediated transcription. Required for hematopoietic stem cell function and hematopoiesis. In Bos taurus (Bovine), this protein is E3 UFM1-protein ligase 1.